The sequence spans 127 residues: Large ribosomal subunit protein uL22 (127 aa).

The protein belongs to the universal ribosomal protein uL22 family. In terms of assembly, part of the 50S ribosomal subunit.

Functionally, this protein binds specifically to 23S rRNA; its binding is stimulated by other ribosomal proteins, e.g. L4, L17, and L20. It is important during the early stages of 50S assembly. It makes multiple contacts with different domains of the 23S rRNA in the assembled 50S subunit and ribosome. In terms of biological role, the globular domain of the protein is located near the polypeptide exit tunnel on the outside of the subunit, while an extended beta-hairpin is found that lines the wall of the exit tunnel in the center of the 70S ribosome. This Methylobacterium sp. (strain 4-46) protein is Large ribosomal subunit protein uL22.